We begin with the raw amino-acid sequence, 253 residues long: MAVTRPPERSAEAVELIEGAGGRALVAPTLELKEAHTESLREVCRRADEWDLVIFTSQAAVESLFQLCREFAGKIRKDCLVAVIGPRTARVAGEHGLRVDIVPEDYTAEGLLDALTGLNIEGWKVALPRTLSARKVLPRGLEMMGAEVLVAEAYRSGLPEDTGPAEELIDGLLDGKVDAVTFTSPLTVENLFKIAGNRRKELIEVLKRVKVAAIGPITLRKLEEHGITAVTPERYTVKDMIAALAVSMGEDVD.

This sequence belongs to the uroporphyrinogen-III synthase family.

The catalysed reaction is hydroxymethylbilane = uroporphyrinogen III + H2O. The protein operates within porphyrin-containing compound metabolism; protoporphyrin-IX biosynthesis; coproporphyrinogen-III from 5-aminolevulinate: step 3/4. Catalyzes cyclization of the linear tetrapyrrole, hydroxymethylbilane, to the macrocyclic uroporphyrinogen III. The chain is Putative uroporphyrinogen-III synthase (hemD) from Methanothermobacter thermautotrophicus (strain ATCC 29096 / DSM 1053 / JCM 10044 / NBRC 100330 / Delta H) (Methanobacterium thermoautotrophicum).